The primary structure comprises 214 residues: rRNA N(6)-adenosine-methyltransferase metl-5 (214 aa).

Residues Gln25, Thr28, Gly55, Cys58, Asp78, and 106–107 each bind S-adenosyl-L-methionine; that span reads DI.

Belongs to the methyltransferase superfamily. PrmA family. In terms of assembly, heterodimer; heterodimerizes with TRMT112/C04H5.1.

The catalysed reaction is adenosine in rRNA + S-adenosyl-L-methionine = N(6)-methyladenosine in rRNA + S-adenosyl-L-homocysteine + H(+). In terms of biological role, catalytic subunit of a heterodimer with TRMT112/C04H5.1, which specifically methylates the 6th position of adenine in position 1717 of 18S rRNA. This Caenorhabditis elegans protein is rRNA N(6)-adenosine-methyltransferase metl-5.